The primary structure comprises 1036 residues: Isoleucine--tRNA ligase (1036 aa).

Positions 46–56 (PFATGLPHYGH) match the 'HIGH' region motif. The short motif at 589–593 (KMSKR) is the 'KMSKS' region element. Residue K592 coordinates ATP.

Belongs to the class-I aminoacyl-tRNA synthetase family. IleS type 2 subfamily. As to quaternary structure, monomer. Zn(2+) is required as a cofactor.

Its subcellular location is the cytoplasm. It catalyses the reaction tRNA(Ile) + L-isoleucine + ATP = L-isoleucyl-tRNA(Ile) + AMP + diphosphate. Its function is as follows. Catalyzes the attachment of isoleucine to tRNA(Ile). As IleRS can inadvertently accommodate and process structurally similar amino acids such as valine, to avoid such errors it has two additional distinct tRNA(Ile)-dependent editing activities. One activity is designated as 'pretransfer' editing and involves the hydrolysis of activated Val-AMP. The other activity is designated 'posttransfer' editing and involves deacylation of mischarged Val-tRNA(Ile). This chain is Isoleucine--tRNA ligase, found in Chlamydia trachomatis serovar L2 (strain ATCC VR-902B / DSM 19102 / 434/Bu).